A 448-amino-acid chain; its full sequence is MIPTFTALLCLGLSLGPRTHMQAGPLPKPTLWAEPGSVISWGNSVTIWCQGTLEAREYRLDKEESPAPWDRQNPLEPKNKARFSIPSMTEDYAGRYRCYYRSPVGWSQPSDPLELVMTGAYSKPTLSALPSPLVTSGKSVTLLCQSRSPMDTFLLIKERAAHPLLHLRSEHGAQQHQAEFPMSPVTSVHGGTYRCFSSHGFSHYLLSHPSDPLELIVSGSLEDPRPSPTRSVSTAAGPEDQPLMPTGSVPHSGLRRHWEVLIGVLVVSILLLSLLLFLLLQHWRQGKHRTLAQRQADFQRPPGAAEPEPKDGGLQRRSSPAADVQGENFCAAVKNTQPEDGVEMDTRQSPHDEDPQAVTYAKVKHSRPRREMASPPSPLSGEFLDTKDRQAEEDRQMDTEAAASEAPQDVTYAQLHSFTLRQKATEPPPSQEGASPAEPSVYATLAIH.

The signal sequence occupies residues 1–21 (MIPTFTALLCLGLSLGPRTHM). Residues 22 to 259 (QAGPLPKPTL…PHSGLRRHWE (238 aa)) are Extracellular-facing. Ig-like C2-type domains follow at residues 27–118 (PKPT…LVMT) and 124–218 (PTLS…LIVS). 2 disulfides stabilise this stretch: Cys-49-Cys-98 and Cys-144-Cys-195. The tract at residues 217 to 248 (VSGSLEDPRPSPTRSVSTAAGPEDQPLMPTGS) is disordered. A helical transmembrane segment spans residues 260 to 280 (VLIGVLVVSILLLSLLLFLLL). Over 281–448 (QHWRQGKHRT…PSVYATLAIH (168 aa)) the chain is Cytoplasmic. Residues 297 to 448 (DFQRPPGAAE…PSVYATLAIH (152 aa)) are disordered. The residue at position 319 (Ser-319) is a Phosphoserine. A compositionally biased stretch (basic and acidic residues) spans 344–354 (MDTRQSPHDED). Residues 358-363 (VTYAKV) carry the ITIM motif 1 motif. Basic and acidic residues predominate over residues 384–398 (LDTKDRQAEEDRQMD). 2 consecutive short sequence motifs (ITIM motif) follow at residues 410–415 (VTYAQL) and 440–445 (SVYATL).

In terms of assembly, interacts with PTPN6. In terms of tissue distribution, detected on monocytes, macrophages, dendritic cells, natural killer cells and B-cells (at protein level). Expressed in the lung.

Its subcellular location is the cell membrane. In terms of biological role, inhibitory receptor involved in the down-regulation of the immune response and the development of immune tolerance. Receptor for FN1. Receptor for apolipoprotein APOE. Receptor for ALCAM/CD166. Inhibits receptor-mediated phosphorylation of cellular proteins and mobilization of intracellular calcium ions. Inhibits FCGR1A/CD64-mediated monocyte activation by inducing phosphatase-mediated down-regulation of the phosphorylation of multiple proteins including LCK, SYK, LAT and ERK, leading to a reduction in TNF production. This inhibition of monocyte activation occurs at least in part via binding to FN1. Inhibits T cell proliferation, inducing anergy, suppressing the differentiation of IFNG-producing CD8+ cytotoxic T cells and enhancing the generation of CD8+ T suppressor cells. Induces up-regulation of CD86 on dendritic cells. Interferes with TNFRSF5-signaling and NF-kappa-B up-regulation. This chain is Leukocyte immunoglobulin-like receptor subfamily B member 4 (LILRB4), found in Homo sapiens (Human).